A 169-amino-acid polypeptide reads, in one-letter code: Transmembrane protein B169L (169 aa).

The next 2 helical transmembrane spans lie at 28 to 48 and 60 to 80; these read NPFI…FAIC and TAIY…YVLN. Asparagine 88 is a glycosylation site (N-linked (GlcNAc...) asparagine; by host). A disordered region spans residues 107-169; that stretch reads DEIIPPISPP…EVIMPSQYNN (63 aa). Low complexity predominate over residues 140 to 154; that stretch reads KPADSKPASSADSKP.

Belongs to the asfivirus B169L family.

The protein localises to the host membrane. Its subcellular location is the virion. The polypeptide is Transmembrane protein B169L (Ornithodoros (relapsing fever ticks)).